The chain runs to 255 residues: Carboxy-S-adenosyl-L-methionine synthase (255 aa).

S-adenosyl-L-methionine-binding positions include Y45, 70–72, 124–125, and N139; these read GCS and DI.

Belongs to the class I-like SAM-binding methyltransferase superfamily. Cx-SAM synthase family. In terms of assembly, homodimer.

The catalysed reaction is prephenate + S-adenosyl-L-methionine = carboxy-S-adenosyl-L-methionine + 3-phenylpyruvate + H2O. Its function is as follows. Catalyzes the conversion of S-adenosyl-L-methionine (SAM) to carboxy-S-adenosyl-L-methionine (Cx-SAM). This chain is Carboxy-S-adenosyl-L-methionine synthase, found in Hamiltonella defensa subsp. Acyrthosiphon pisum (strain 5AT).